The sequence spans 1183 residues: DNA-directed RNA polymerase subunit beta (1183 aa).

The segment covering 1149 to 1162 has biased composition (acidic residues); that stretch reads DNEIEMADVDDEDA. The tract at residues 1149-1183 is disordered; the sequence is DNEIEMADVDDEDATERKVDLQQKDVPETQKETTD. Residues 1163 to 1183 show a composition bias toward basic and acidic residues; sequence TERKVDLQQKDVPETQKETTD.

This sequence belongs to the RNA polymerase beta chain family. As to quaternary structure, the RNAP catalytic core consists of 2 alpha, 1 beta, 1 beta' and 1 omega subunit. When a sigma factor is associated with the core the holoenzyme is formed, which can initiate transcription.

The catalysed reaction is RNA(n) + a ribonucleoside 5'-triphosphate = RNA(n+1) + diphosphate. In terms of biological role, DNA-dependent RNA polymerase catalyzes the transcription of DNA into RNA using the four ribonucleoside triphosphates as substrates. This chain is DNA-directed RNA polymerase subunit beta, found in Staphylococcus haemolyticus (strain JCSC1435).